Consider the following 439-residue polypeptide: Trigger factor (439 aa).

Positions 165-250 (GDFAKFDFEG…LHEIQELKLP (86 aa)) constitute a PPIase FKBP-type domain.

Belongs to the FKBP-type PPIase family. Tig subfamily.

The protein resides in the cytoplasm. It catalyses the reaction [protein]-peptidylproline (omega=180) = [protein]-peptidylproline (omega=0). Involved in protein export. Acts as a chaperone by maintaining the newly synthesized protein in an open conformation. Functions as a peptidyl-prolyl cis-trans isomerase. This is Trigger factor from Campylobacter lari (strain RM2100 / D67 / ATCC BAA-1060).